Here is a 206-residue protein sequence, read N- to C-terminus: Superoxide dismutase [Mn] (206 aa).

Residues His27, His82, Asp168, and His172 each contribute to the Mn(2+) site.

It belongs to the iron/manganese superoxide dismutase family. Requires Mn(2+) as cofactor.

The catalysed reaction is 2 superoxide + 2 H(+) = H2O2 + O2. Its function is as follows. Destroys superoxide anion radicals which are normally produced within the cells and which are toxic to biological systems. This is Superoxide dismutase [Mn] (sodA) from Lactococcus lactis subsp. lactis (strain IL1403) (Streptococcus lactis).